Reading from the N-terminus, the 235-residue chain is Peptidyl-tRNA hydrolase (235 aa).

Y14 lines the tRNA pocket. H19 (proton acceptor) is an active-site residue. TRNA contacts are provided by F64, N66, and N112. The interval 186–235 (RTAPPRSSGGSPKTDKPAKATREPPPAAKPEATPEEETRSPLQRLVDKFR) is disordered. The segment covering 198 to 207 (KTDKPAKATR) has biased composition (basic and acidic residues).

It belongs to the PTH family. Monomer.

Its subcellular location is the cytoplasm. The catalysed reaction is an N-acyl-L-alpha-aminoacyl-tRNA + H2O = an N-acyl-L-amino acid + a tRNA + H(+). Functionally, hydrolyzes ribosome-free peptidyl-tRNAs (with 1 or more amino acids incorporated), which drop off the ribosome during protein synthesis, or as a result of ribosome stalling. Its function is as follows. Catalyzes the release of premature peptidyl moieties from peptidyl-tRNA molecules trapped in stalled 50S ribosomal subunits, and thus maintains levels of free tRNAs and 50S ribosomes. In Dinoroseobacter shibae (strain DSM 16493 / NCIMB 14021 / DFL 12), this protein is Peptidyl-tRNA hydrolase.